The primary structure comprises 507 residues: Putative pentatricopeptide repeat-containing protein At3g16710, mitochondrial (507 aa).

The transit peptide at 1–48 directs the protein to the mitochondrion; the sequence is MRRSIATGFASIVKGFHLHSHRHRLQISNPRTAASLSLCGFCFWIRAF. 13 PPR repeats span residues 47–81, 82–116, 117–151, 152–186, 187–221, 222–256, 257–291, 292–326, 327–361, 362–396, 397–431, 432–466, and 467–501; these read AFSS…RPLP, SIID…GIPP, LLCT…GFEP, DLVT…GFKP, NVVT…GSRP, NVVT…RIEP, NVIT…SVYP, DVFT…GCYP, NEVI…GVVA, NTIT…RAPP, DIRT…EMDI, NIVT…GMKP, and NVIT…GFLP.

This sequence belongs to the PPR family. P subfamily.

The protein resides in the mitochondrion. The polypeptide is Putative pentatricopeptide repeat-containing protein At3g16710, mitochondrial (Arabidopsis thaliana (Mouse-ear cress)).